The chain runs to 261 residues: MSLKKSPFFELRSGSVDTLLFTVKTTDLDALRAELVKRFEATPEFFADDVVAIDVRRLADGERVALADIRQMLNDVRMRPVGVVALATQGWAGEAGLPLLEARDRRAPAAKPADEAEPAAVPAVETAAAPAAAAAPEQSSDPAPTLVQAGGQTLVIDRPLRSGQQIYAKGDLVVLAPVSHGAEIIAEGNIHIYAPLRGRALAGVHGNHDARIFCTCLEPELISIAGIYRTTENPLPADVLGKSVQIRLEEEKLMIEPLRLT.

Residues 106–144 (RAPAAKPADEAEPAAVPAVETAAAPAAAAAPEQSSDPAP) are disordered. Residues 118–144 (PAAVPAVETAAAPAAAAAPEQSSDPAP) show a composition bias toward low complexity.

This sequence belongs to the MinC family. In terms of assembly, interacts with MinD and FtsZ.

Its function is as follows. Cell division inhibitor that blocks the formation of polar Z ring septums. Rapidly oscillates between the poles of the cell to destabilize FtsZ filaments that have formed before they mature into polar Z rings. Prevents FtsZ polymerization. In Burkholderia orbicola (strain MC0-3), this protein is Probable septum site-determining protein MinC.